A 106-amino-acid polypeptide reads, in one-letter code: Putative membrane protein insertion efficiency factor (106 aa).

This sequence belongs to the UPF0161 family.

The protein resides in the cell inner membrane. Its function is as follows. Could be involved in insertion of integral membrane proteins into the membrane. The protein is Putative membrane protein insertion efficiency factor of Methylacidiphilum infernorum (isolate V4) (Methylokorus infernorum (strain V4)).